The following is a 97-amino-acid chain: Co-chaperonin GroES (97 aa).

It belongs to the GroES chaperonin family. Heptamer of 7 subunits arranged in a ring. Interacts with the chaperonin GroEL.

It localises to the cytoplasm. Functionally, together with the chaperonin GroEL, plays an essential role in assisting protein folding. The GroEL-GroES system forms a nano-cage that allows encapsulation of the non-native substrate proteins and provides a physical environment optimized to promote and accelerate protein folding. GroES binds to the apical surface of the GroEL ring, thereby capping the opening of the GroEL channel. The sequence is that of Co-chaperonin GroES from Klebsiella pneumoniae (strain 342).